The primary structure comprises 326 residues: Protein TMED8 (326 aa).

The disordered stretch occupies residues 1-80 (MSDLQAAEGP…VSPGSKDATE (80 aa)). The region spanning 160 to 324 (PPCIWTFAKV…NKTLYFHIYY (165 aa)) is the GOLD domain. Lys-170 carries the N6-acetyllysine modification. Residues 238–268 (DSCDDEDEEEEEEEEIEEPVPAGDVERGSRS) form a disordered region. Residues 239 to 255 (SCDDEDEEEEEEEEIEE) are compositionally biased toward acidic residues.

The chain is Protein TMED8 (TMED8) from Pongo abelii (Sumatran orangutan).